The following is a 116-amino-acid chain: Ribonuclease P protein component (116 aa).

It belongs to the RnpA family. As to quaternary structure, consists of a catalytic RNA component (M1 or rnpB) and a protein subunit.

The enzyme catalyses Endonucleolytic cleavage of RNA, removing 5'-extranucleotides from tRNA precursor.. In terms of biological role, RNaseP catalyzes the removal of the 5'-leader sequence from pre-tRNA to produce the mature 5'-terminus. It can also cleave other RNA substrates such as 4.5S RNA. The protein component plays an auxiliary but essential role in vivo by binding to the 5'-leader sequence and broadening the substrate specificity of the ribozyme. This is Ribonuclease P protein component from Geobacter sp. (strain M21).